Consider the following 82-residue polypeptide: Putative membrane protein insertion efficiency factor (82 aa).

This sequence belongs to the UPF0161 family.

The protein resides in the cell inner membrane. Its function is as follows. Could be involved in insertion of integral membrane proteins into the membrane. This is Putative membrane protein insertion efficiency factor from Rickettsia massiliae (strain Mtu5).